The following is a 293-amino-acid chain: Homoserine kinase (293 aa).

An ATP-binding site is contributed by 84–94 (PFSRGLGSSSS).

The protein belongs to the GHMP kinase family. Homoserine kinase subfamily.

It localises to the cytoplasm. It carries out the reaction L-homoserine + ATP = O-phospho-L-homoserine + ADP + H(+). It functions in the pathway amino-acid biosynthesis; L-threonine biosynthesis; L-threonine from L-aspartate: step 4/5. In terms of biological role, catalyzes the ATP-dependent phosphorylation of L-homoserine to L-homoserine phosphate. This is Homoserine kinase from Campylobacter fetus subsp. fetus (strain 82-40).